Consider the following 141-residue polypeptide: Nucleoside triphosphatase NudI (141 aa).

Positions M1–L141 constitute a Nudix hydrolase domain. The short motif at G38–G59 is the Nudix box element.

It belongs to the Nudix hydrolase family. NudI subfamily. In terms of assembly, monomer. Mg(2+) serves as cofactor.

It catalyses the reaction a ribonucleoside 5'-triphosphate + H2O = a ribonucleoside 5'-phosphate + diphosphate + H(+). It carries out the reaction a 2'-deoxyribonucleoside 5'-triphosphate + H2O = a 2'-deoxyribonucleoside 5'-phosphate + diphosphate + H(+). The enzyme catalyses dUTP + H2O = dUMP + diphosphate + H(+). The catalysed reaction is dTTP + H2O = dTMP + diphosphate + H(+). It catalyses the reaction dCTP + H2O = dCMP + diphosphate + H(+). In terms of biological role, catalyzes the hydrolysis of nucleoside triphosphates, with a preference for pyrimidine deoxynucleoside triphosphates (dUTP, dTTP and dCTP). In Escherichia coli (strain ATCC 8739 / DSM 1576 / NBRC 3972 / NCIMB 8545 / WDCM 00012 / Crooks), this protein is Nucleoside triphosphatase NudI.